Reading from the N-terminus, the 521-residue chain is Bifunctional purine biosynthesis protein PurH (521 aa).

The MGS-like domain occupies 1 to 150 (MSEDRKAIKR…KNHPSVAVVT (150 aa)).

The protein belongs to the PurH family.

It catalyses the reaction (6R)-10-formyltetrahydrofolate + 5-amino-1-(5-phospho-beta-D-ribosyl)imidazole-4-carboxamide = 5-formamido-1-(5-phospho-D-ribosyl)imidazole-4-carboxamide + (6S)-5,6,7,8-tetrahydrofolate. The catalysed reaction is IMP + H2O = 5-formamido-1-(5-phospho-D-ribosyl)imidazole-4-carboxamide. The protein operates within purine metabolism; IMP biosynthesis via de novo pathway; 5-formamido-1-(5-phospho-D-ribosyl)imidazole-4-carboxamide from 5-amino-1-(5-phospho-D-ribosyl)imidazole-4-carboxamide (10-formyl THF route): step 1/1. Its pathway is purine metabolism; IMP biosynthesis via de novo pathway; IMP from 5-formamido-1-(5-phospho-D-ribosyl)imidazole-4-carboxamide: step 1/1. The protein is Bifunctional purine biosynthesis protein PurH of Corynebacterium efficiens (strain DSM 44549 / YS-314 / AJ 12310 / JCM 11189 / NBRC 100395).